Reading from the N-terminus, the 126-residue chain is Large ribosomal subunit protein bL17 (126 aa).

It belongs to the bacterial ribosomal protein bL17 family. Part of the 50S ribosomal subunit. Contacts protein L32.

This chain is Large ribosomal subunit protein bL17, found in Xylella fastidiosa (strain 9a5c).